We begin with the raw amino-acid sequence, 1328 residues long: DNA-directed RNA polymerase subunit beta (1328 aa).

The protein belongs to the RNA polymerase beta chain family. In terms of assembly, the RNAP catalytic core consists of 2 alpha, 1 beta, 1 beta' and 1 omega subunit. When a sigma factor is associated with the core the holoenzyme is formed, which can initiate transcription.

It carries out the reaction RNA(n) + a ribonucleoside 5'-triphosphate = RNA(n+1) + diphosphate. Functionally, DNA-dependent RNA polymerase catalyzes the transcription of DNA into RNA using the four ribonucleoside triphosphates as substrates. This is DNA-directed RNA polymerase subunit beta from Karelsulcia muelleri (strain GWSS) (Sulcia muelleri).